The following is a 163-amino-acid chain: Probable RNA-binding protein EIF1AD (163 aa).

The S1-like domain maps to 18–96 (MMEDDYELPT…VKAEISKILT (79 aa)). Residues 106-163 (AGIWPERFAKNPPQEAKAQNDDEDSDFEDDLTPNTNRPVQESDEEDEDTDTESSDEED) are disordered. Composition is skewed to acidic residues over residues 126–136 (DDEDSDFEDDL) and 146–163 (ESDE…DEED).

Belongs to the EIF1AD family.

The protein is Probable RNA-binding protein EIF1AD of Drosophila pseudoobscura pseudoobscura (Fruit fly).